We begin with the raw amino-acid sequence, 65 residues long: Large ribosomal subunit protein uL29 (65 aa).

The protein belongs to the universal ribosomal protein uL29 family.

This chain is Large ribosomal subunit protein uL29, found in Bacteroides thetaiotaomicron (strain ATCC 29148 / DSM 2079 / JCM 5827 / CCUG 10774 / NCTC 10582 / VPI-5482 / E50).